The sequence spans 224 residues: Small ribosomal subunit protein uS3 (224 aa).

The KH type-2 domain maps to 39 to 107; that stretch reads IREFLKKKPS…DVWVEIAEVK (69 aa).

This sequence belongs to the universal ribosomal protein uS3 family. Part of the 30S ribosomal subunit. Forms a tight complex with proteins S10 and S14.

In terms of biological role, binds the lower part of the 30S subunit head. Binds mRNA in the 70S ribosome, positioning it for translation. The chain is Small ribosomal subunit protein uS3 from Chlamydia trachomatis serovar L2 (strain ATCC VR-902B / DSM 19102 / 434/Bu).